The following is a 33-amino-acid chain: Brevinin-2Rh (33 aa).

Cys-27 and Cys-33 are oxidised to a cystine.

As to expression, expressed by the skin glands.

The protein resides in the secreted. Functionally, antimicrobial peptide. The polypeptide is Brevinin-2Rh (Pelophylax ridibundus (Marsh frog)).